The chain runs to 131 residues: Sperm microtubule inner protein 11 (131 aa).

The interval 17–44 (SKKRDKTEETNQKDPVPTRLPPIFSEDG) is disordered.

Microtubule inner protein component of sperm flagellar doublet microtubules. In terms of tissue distribution, expressed in sperm.

It localises to the cytoplasm. It is found in the cytoskeleton. The protein localises to the flagellum axoneme. Functionally, microtubule inner protein (MIP) part of the dynein-decorated doublet microtubules (DMTs) in flagellum axoneme. May serve to reinforce and thus stabilize the microtubule structure in the sperm flagella. This is Sperm microtubule inner protein 11 (SPMIP11) from Bos taurus (Bovine).